The primary structure comprises 528 residues: Putative galacturonosyltransferase 2 (528 aa).

The protein belongs to the glycosyltransferase 8 family.

The protein operates within glycan metabolism; pectin biosynthesis. In terms of biological role, may be involved in pectin and/or xylans biosynthesis in cell walls. This chain is Putative galacturonosyltransferase 2 (GAUT2), found in Arabidopsis thaliana (Mouse-ear cress).